The chain runs to 670 residues: DNA ligase (670 aa).

Residues 31–35 (DAEYD), 76–77 (SL), and E108 contribute to the NAD(+) site. The active-site N6-AMP-lysine intermediate is the K110. NAD(+) is bound by residues R131, E166, K271, and K295. 4 residues coordinate Zn(2+): C388, C391, C406, and C412. Positions 579–668 (NIGGSLSGKK…NTPALKKETS (90 aa)) constitute a BRCT domain.

The protein belongs to the NAD-dependent DNA ligase family. LigA subfamily. Mg(2+) serves as cofactor. Mn(2+) is required as a cofactor.

It catalyses the reaction NAD(+) + (deoxyribonucleotide)n-3'-hydroxyl + 5'-phospho-(deoxyribonucleotide)m = (deoxyribonucleotide)n+m + AMP + beta-nicotinamide D-nucleotide.. Its function is as follows. DNA ligase that catalyzes the formation of phosphodiester linkages between 5'-phosphoryl and 3'-hydroxyl groups in double-stranded DNA using NAD as a coenzyme and as the energy source for the reaction. It is essential for DNA replication and repair of damaged DNA. The sequence is that of DNA ligase from Neorickettsia sennetsu (strain ATCC VR-367 / Miyayama) (Ehrlichia sennetsu).